A 361-amino-acid chain; its full sequence is Cysteine-rich with EGF-like domain protein 2-B (361 aa).

An N-terminal signal peptide occupies residues 1-24; the sequence is MNGSRAWRLAAWLLLCLSCSAAVA. An EGF-like 1 domain is found at 134 to 176; it reads DCLACLGGSERPCHGNGFCSGDGTRSGDGSCRCKAEYTGSFCL. Disulfide bonds link C138-C152, C146-C164, and C166-C175. A glycan (N-linked (GlcNAc...) asparagine) is linked at N188. FU repeat units lie at residues 191-238 and 251-298; these read HAVC…EESP and SFLC…SEKL. The EGF-like 2; calcium-binding domain occupies 288–329; sequence DVDECDASEKLCLRENEVCLNTAGSYKCTCSEGFEDKEGNCV. 3 disulfides stabilise this stretch: C292/C306, C299/C315, and C317/C328. Residues 339–361 form a disordered region; sequence ITEGETGTPASDTNILNTAHEDL. Positions 346–355 are enriched in polar residues; the sequence is TPASDTNILN.

It belongs to the CRELD family.

It is found in the secreted. It localises to the endoplasmic reticulum. In terms of biological role, possible role in neuronal acetylcholine receptor transport. The protein is Cysteine-rich with EGF-like domain protein 2-B (creld2-b) of Xenopus laevis (African clawed frog).